Here is a 513-residue protein sequence, read N- to C-terminus: Ribonuclease Y (513 aa).

A helical transmembrane segment spans residues Tyr6–Asp26. In terms of domain architecture, KH spans Thr203–Val288. In terms of domain architecture, HD spans Val329–Ala422.

Belongs to the RNase Y family.

It is found in the cell membrane. In terms of biological role, endoribonuclease that initiates mRNA decay. In Clostridium botulinum (strain Langeland / NCTC 10281 / Type F), this protein is Ribonuclease Y.